The following is a 396-amino-acid chain: Phosphoglycerate kinase (396 aa).

Residues 19–21 (DFN), Arg34, 57–60 (HLGK), Arg116, and Arg153 contribute to the substrate site. Residues Lys204, Glu324, and 351-354 (GGDT) each bind ATP.

This sequence belongs to the phosphoglycerate kinase family. In terms of assembly, monomer.

The protein localises to the cytoplasm. It catalyses the reaction (2R)-3-phosphoglycerate + ATP = (2R)-3-phospho-glyceroyl phosphate + ADP. It participates in carbohydrate degradation; glycolysis; pyruvate from D-glyceraldehyde 3-phosphate: step 2/5. The chain is Phosphoglycerate kinase from Maridesulfovibrio salexigens (strain ATCC 14822 / DSM 2638 / NCIMB 8403 / VKM B-1763) (Desulfovibrio salexigens).